Here is a 173-residue protein sequence, read N- to C-terminus: Crossover junction endodeoxyribonuclease RuvC (173 aa).

Catalysis depends on residues D8, E67, and D139. Mg(2+) contacts are provided by D8, E67, and D139.

Belongs to the RuvC family. In terms of assembly, homodimer which binds Holliday junction (HJ) DNA. The HJ becomes 2-fold symmetrical on binding to RuvC with unstacked arms; it has a different conformation from HJ DNA in complex with RuvA. In the full resolvosome a probable DNA-RuvA(4)-RuvB(12)-RuvC(2) complex forms which resolves the HJ. Mg(2+) is required as a cofactor.

Its subcellular location is the cytoplasm. It carries out the reaction Endonucleolytic cleavage at a junction such as a reciprocal single-stranded crossover between two homologous DNA duplexes (Holliday junction).. In terms of biological role, the RuvA-RuvB-RuvC complex processes Holliday junction (HJ) DNA during genetic recombination and DNA repair. Endonuclease that resolves HJ intermediates. Cleaves cruciform DNA by making single-stranded nicks across the HJ at symmetrical positions within the homologous arms, yielding a 5'-phosphate and a 3'-hydroxyl group; requires a central core of homology in the junction. The consensus cleavage sequence is 5'-(A/T)TT(C/G)-3'. Cleavage occurs on the 3'-side of the TT dinucleotide at the point of strand exchange. HJ branch migration catalyzed by RuvA-RuvB allows RuvC to scan DNA until it finds its consensus sequence, where it cleaves and resolves the cruciform DNA. This is Crossover junction endodeoxyribonuclease RuvC from Vibrio parahaemolyticus serotype O3:K6 (strain RIMD 2210633).